An 80-amino-acid polypeptide reads, in one-letter code: Acyl carrier protein (80 aa).

The Carrier domain occupies 4 to 79 (DATLEKVRSI…DAVKYIEDKQ (76 aa)). Ser-39 is modified (O-(pantetheine 4'-phosphoryl)serine).

Belongs to the acyl carrier protein (ACP) family. 4'-phosphopantetheine is transferred from CoA to a specific serine of apo-ACP by AcpS. This modification is essential for activity because fatty acids are bound in thioester linkage to the sulfhydryl of the prosthetic group.

The protein resides in the cytoplasm. Its pathway is lipid metabolism; fatty acid biosynthesis. Functionally, carrier of the growing fatty acid chain in fatty acid biosynthesis. The protein is Acyl carrier protein of Prochlorococcus marinus (strain MIT 9211).